The following is a 425-amino-acid chain: Pyruvate dehydrogenase E1 component subunit alpha-3, chloroplastic (425 aa).

A chloroplast-targeting transit peptide spans 1–66; the sequence is MAAASSFTAA…VLPGNKAAPA (66 aa). Residues histidine 109, tyrosine 135, arginine 136, alanine 184, isoleucine 186, aspartate 224, glycine 225, and asparagine 253 each contribute to the pyruvate site. Thiamine diphosphate is bound by residues tyrosine 135, arginine 136, alanine 184, isoleucine 186, aspartate 224, glycine 225, asparagine 253, and histidine 322. A Mg(2+)-binding site is contributed by aspartate 224. Mg(2+) is bound at residue asparagine 253.

In terms of assembly, tetramer of 2 alpha and 2 beta subunits. The cofactor is thiamine diphosphate. It depends on Mg(2+) as a cofactor.

The protein resides in the plastid. It is found in the chloroplast. The enzyme catalyses N(6)-[(R)-lipoyl]-L-lysyl-[protein] + pyruvate + H(+) = N(6)-[(R)-S(8)-acetyldihydrolipoyl]-L-lysyl-[protein] + CO2. The pyruvate dehydrogenase complex catalyzes the overall conversion of pyruvate to acetyl-CoA and CO(2). It contains multiple copies of three enzymatic components: pyruvate dehydrogenase (E1), dihydrolipoamide acetyltransferase (E2) and lipoamide dehydrogenase (E3). The protein is Pyruvate dehydrogenase E1 component subunit alpha-3, chloroplastic of Oryza sativa subsp. japonica (Rice).